The chain runs to 324 residues: Acetyl-coenzyme A carboxylase carboxyl transferase subunit alpha (324 aa).

The 255-residue stretch at 44-298 (QLERRAEELR…KQTLIDTIDE (255 aa)) folds into the CoA carboxyltransferase C-terminal domain.

It belongs to the AccA family. In terms of assembly, acetyl-CoA carboxylase is a heterohexamer composed of biotin carboxyl carrier protein (AccB), biotin carboxylase (AccC) and two subunits each of ACCase subunit alpha (AccA) and ACCase subunit beta (AccD).

It localises to the cytoplasm. It catalyses the reaction N(6)-carboxybiotinyl-L-lysyl-[protein] + acetyl-CoA = N(6)-biotinyl-L-lysyl-[protein] + malonyl-CoA. Its pathway is lipid metabolism; malonyl-CoA biosynthesis; malonyl-CoA from acetyl-CoA: step 1/1. Component of the acetyl coenzyme A carboxylase (ACC) complex. First, biotin carboxylase catalyzes the carboxylation of biotin on its carrier protein (BCCP) and then the CO(2) group is transferred by the carboxyltransferase to acetyl-CoA to form malonyl-CoA. The sequence is that of Acetyl-coenzyme A carboxylase carboxyl transferase subunit alpha from Rippkaea orientalis (strain PCC 8801 / RF-1) (Cyanothece sp. (strain PCC 8801)).